The sequence spans 336 residues: MAFNMHNRNLLSLMHHSPRDVRYLLDLSRDLKRAKYTGTEQQHLKRKNIALIFEKTSTRTRCAFEVAAYDQGANVTYIDPNSSQIGHKESMKDTARVLGRMYDAIEYRGFKQEIVEELATYAGVPVFNGLTAEYHPTQMLADVLTMREHTDKPLHDITYAYLGDARNNMGNSLLLIGAKLGMDVRIAAPKALWPHDDHVAACKKFAEESGARITLTEDPKEAVKGVDFVHTDVWVSMGEPVEAWGERIKELLPYQVNVEIMKAAGNPRVKFMHCLPAFHNSETKVGKQIAEQYPNLKNGIEVTEDVFESPWNIAFEQAENRMHTIKAILVSTLADI.

Carbamoyl phosphate contacts are provided by residues 57-60 (STRT), Gln-84, Arg-108, and 135-138 (HPTQ). Residues Asn-168, Asp-232, and 236-237 (SM) contribute to the L-ornithine site. Carbamoyl phosphate-binding positions include 274–275 (CL) and Arg-321.

This sequence belongs to the aspartate/ornithine carbamoyltransferase superfamily. OTCase family.

The protein resides in the cytoplasm. It catalyses the reaction carbamoyl phosphate + L-ornithine = L-citrulline + phosphate + H(+). It functions in the pathway amino-acid degradation; L-arginine degradation via ADI pathway; carbamoyl phosphate from L-arginine: step 2/2. Its function is as follows. Reversibly catalyzes the transfer of the carbamoyl group from carbamoyl phosphate (CP) to the N(epsilon) atom of ornithine (ORN) to produce L-citrulline. The sequence is that of Ornithine carbamoyltransferase, catabolic (arcB) from Ectopseudomonas mendocina (Pseudomonas mendocina).